The following is a 69-amino-acid chain: Putative membrane protein insertion efficiency factor (69 aa).

This sequence belongs to the UPF0161 family.

The protein resides in the cell inner membrane. In terms of biological role, could be involved in insertion of integral membrane proteins into the membrane. This chain is Putative membrane protein insertion efficiency factor, found in Nitrosomonas eutropha (strain DSM 101675 / C91 / Nm57).